We begin with the raw amino-acid sequence, 343 residues long: Ribosomal RNA small subunit methyltransferase C (343 aa).

The protein belongs to the methyltransferase superfamily. RsmC family. As to quaternary structure, monomer.

Its subcellular location is the cytoplasm. It carries out the reaction guanosine(1207) in 16S rRNA + S-adenosyl-L-methionine = N(2)-methylguanosine(1207) in 16S rRNA + S-adenosyl-L-homocysteine + H(+). Its function is as follows. Specifically methylates the guanine in position 1207 of 16S rRNA in the 30S particle. This is Ribosomal RNA small subunit methyltransferase C from Escherichia coli O81 (strain ED1a).